The following is a 31-amino-acid chain: Cytochrome b6-f complex subunit 6 (31 aa).

The helical transmembrane segment at 4-26 threads the bilayer; the sequence is ITSYFGFLLAALTITSALLIGLN.

It belongs to the PetL family. As to quaternary structure, the 4 large subunits of the cytochrome b6-f complex are cytochrome b6, subunit IV (17 kDa polypeptide, PetD), cytochrome f and the Rieske protein, while the 4 small subunits are PetG, PetL, PetM and PetN. The complex functions as a dimer.

The protein localises to the plastid. It localises to the chloroplast thylakoid membrane. Component of the cytochrome b6-f complex, which mediates electron transfer between photosystem II (PSII) and photosystem I (PSI), cyclic electron flow around PSI, and state transitions. PetL is important for photoautotrophic growth as well as for electron transfer efficiency and stability of the cytochrome b6-f complex. The polypeptide is Cytochrome b6-f complex subunit 6 (Amborella trichopoda).